Here is a 238-residue protein sequence, read N- to C-terminus: UPF0280 protein Msm_0088 (238 aa).

This sequence belongs to the UPF0280 family.

The sequence is that of UPF0280 protein Msm_0088 from Methanobrevibacter smithii (strain ATCC 35061 / DSM 861 / OCM 144 / PS).